The sequence spans 185 residues: uncharacterized protein (185 aa).

The N-terminal stretch at 1–24 (MPCNRAVFGAFVLALLISLQSVYF) is a signal peptide. Residues 50–70 (VAVNVIVEFSFDILFFLCGLL) form a helical membrane-spanning segment. Over residues 96 to 113 (ELEHVSSRRRNDSRDDST) the composition is skewed to basic and acidic residues. The disordered stretch occupies residues 96–185 (ELEHVSSRRR…LFTAGGIGLP (90 aa)). Residues 114–126 (VRNVSKTSPLASQ) are compositionally biased toward polar residues. Residues 127 to 138 (RSRDHFDGDPRE) show a composition bias toward basic and acidic residues. Over residues 139 to 155 (PAPPAYSPADFYPPPAS) the composition is skewed to pro residues.

It is found in the host membrane. This is an uncharacterized protein from Colorado tick fever virus (strain USA/Florio N-7180) (CTFV).